Here is a 350-residue protein sequence, read N- to C-terminus: MSKNKLSKGQQRRVNANHQRRLKTSKEKPDYDDNLFGEPDEGIVISRFGMHADVESADGDVHRCNIRRTIRSLVTGDRVVWRPGKPAAEGVNVKGIVEAVHERTSVLTRPDFYDGVKPIAANIDQIVIVSAILPELSLNIIDRYLVACETLQIEPIIVLNKIDLLDDEGMAFVNEQMDIYRNIGYRVLMVSSHTQDGLKPLEEALTGRISIFAGQSGVGKSSLLNALLGLQKEILTNDVSDNSGLGQHTTTAARLYHFPHGGDVIDSPGVREFGLWHLEPEQITQGFVEFHDYLGLCKYRDCKHDTDPGCAIREAVEEGKIAETRFENYHRILESMAQVKTRKNFSDTDD.

Residues 1-17 are compositionally biased toward polar residues; it reads MSKNKLSKGQQRRVNAN. The tract at residues 1–33 is disordered; sequence MSKNKLSKGQQRRVNANHQRRLKTSKEKPDYDD. A CP-type G domain is found at 104–273; sequence TSVLTRPDFY…VIDSPGVREF (170 aa). Residues 160 to 163 and 214 to 222 contribute to the GTP site; these read NKID and GQSGVGKSS. Zn(2+) is bound by residues cysteine 297, cysteine 302, histidine 304, and cysteine 310.

Belongs to the TRAFAC class YlqF/YawG GTPase family. RsgA subfamily. As to quaternary structure, monomer. Associates with 30S ribosomal subunit, binds 16S rRNA. Zn(2+) is required as a cofactor.

It is found in the cytoplasm. Functionally, one of several proteins that assist in the late maturation steps of the functional core of the 30S ribosomal subunit. Helps release RbfA from mature subunits. May play a role in the assembly of ribosomal proteins into the subunit. Circularly permuted GTPase that catalyzes slow GTP hydrolysis, GTPase activity is stimulated by the 30S ribosomal subunit. The sequence is that of Small ribosomal subunit biogenesis GTPase RsgA from Shigella boydii serotype 18 (strain CDC 3083-94 / BS512).